The chain runs to 194 residues: Ribosome maturation factor RimP (194 aa).

Belongs to the RimP family.

It is found in the cytoplasm. Required for maturation of 30S ribosomal subunits. The chain is Ribosome maturation factor RimP from Jannaschia sp. (strain CCS1).